Reading from the N-terminus, the 160-residue chain is uncharacterized protein (160 aa).

It localises to the mitochondrion. This is an uncharacterized protein from Arabidopsis thaliana (Mouse-ear cress).